The following is a 109-amino-acid chain: UPF0060 membrane protein RHA1_ro06609 (109 aa).

4 helical membrane-spanning segments follow: residues 7 to 27, 33 to 53, 62 to 82, and 88 to 108; these read VALFAVAALFEIGGAWLVWQG, GWIWIGAGVAALGAYGFVATL, ILAAYGGVFVAGSLIWGMVAD, and RWDVSGALICLLGMAVIMYAP.

Belongs to the UPF0060 family.

It is found in the cell membrane. This is UPF0060 membrane protein RHA1_ro06609 from Rhodococcus jostii (strain RHA1).